The chain runs to 130 residues: Probable pilin MJ0835.1 (130 aa).

The propeptide occupies 1 to 14 (MNTMENKIIKSKKA). The QXSXEXXXL signature appears at 15–23 (QVSLEFSFL).

In terms of processing, the N-terminus is cleaved by the prepilin peptidase EppA, which recognizes the class III signal sequence.

Its subcellular location is the secreted. The protein localises to the cell surface. It is found in the fimbrium. This chain is Probable pilin MJ0835.1, found in Methanocaldococcus jannaschii (strain ATCC 43067 / DSM 2661 / JAL-1 / JCM 10045 / NBRC 100440) (Methanococcus jannaschii).